Here is a 1016-residue protein sequence, read N- to C-terminus: TBC1 domain family member 5 homolog B (1016 aa).

5 disordered regions span residues 1–23, 60–109, 179–209, 463–566, and 704–872; these read MDTS…IRNS, SPLI…TTTT, NNNN…DMNN, PTQQ…EEEE, and PPTT…SSHV. Residues 12–23 show a composition bias toward polar residues; the sequence is NSGTTTPNIRNS. Low complexity predominate over residues 79 to 88; sequence QQQQQQQQQQ. The 357-residue stretch at 280–636 folds into the Rab-GAP TBC domain; the sequence is LKYSPLRGIA…NIWDALFAYG (357 aa). The span at 467 to 525 shows a compositional bias: low complexity; it reads TNNSNNSNNTNNNNTTTSPSSSSSSSSSSTTTAAATTVSSSTSTSSSSSTITSSSSSTV. Pro residues predominate over residues 526–544; it reads SPPPPSSSSSPSPPPPPPL. A compositionally biased stretch (low complexity) spans 545–558; that stretch reads GSNSPTVASSSSSS. Polar residues predominate over residues 704 to 717; it reads PPTTLSSSGSRQIP. Low complexity-rich tracts occupy residues 718–755 and 766–789; these read NNNN…NNNI and PFPE…QLSS. Residues 790–806 show a composition bias toward polar residues; it reads ANTTPIDPLSNKTTPLI. Residues 807 to 872 show a composition bias toward low complexity; it reads SSTSNVSNTP…SSSLNNSSHV (66 aa).

Its function is as follows. May act as a GTPase-activating protein for Rab family protein(s). The sequence is that of TBC1 domain family member 5 homolog B (tbc1d5B) from Dictyostelium discoideum (Social amoeba).